Reading from the N-terminus, the 359-residue chain is Probable NAD(P)H nitroreductase PigM (359 aa).

The protein belongs to the nitroreductase family. Requires FMN as cofactor.

The protein operates within antibiotic biosynthesis; prodigiosin biosynthesis. In terms of biological role, involved in the biosynthesis of 4-methoxy-2,2'-bipyrrole-5-carbaldehyde (MBC), one of the terminal products involved in the biosynthesis of the red antibiotic prodigiosin (Pig). Catalyzes the oxidation of the hydroxy group of 4-hydroxy-2,2'-bipyrrole-5-methanol (HBM) to yield 4-methoxy-2,2'-bipyrrole-5-carbaldehyde (MBC). This chain is Probable NAD(P)H nitroreductase PigM, found in Serratia sp. (strain ATCC 39006) (Prodigiosinella confusarubida).